The sequence spans 940 residues: UvrABC system protein A (940 aa).

31-38 (GLSGSGKS) provides a ligand contact to ATP. A C4-type zinc finger spans residues 253-280 (CPICGYSMRELEPRLFSFNNPAGACPTC). ABC transporter domains lie at 310–587 (WDRR…PESL) and 607–937 (ANPE…RFLK). 640–647 (GVSGSGKS) lines the ATP pocket. The C4-type zinc finger occupies 740-766 (CEACQGDGVIKVEMHFLPDIYVPCDQC).

It belongs to the ABC transporter superfamily. UvrA family. Forms a heterotetramer with UvrB during the search for lesions. Interacts with TRCF (Mfd). UvrB and TRCF binding to UvrA could be mutually exclusive.

The protein localises to the cytoplasm. In terms of biological role, the UvrABC repair system catalyzes the recognition and processing of DNA lesions. UvrA is an ATPase and a DNA-binding protein. A damage recognition complex composed of 2 UvrA and 2 UvrB subunits scans DNA for abnormalities. When the presence of a lesion has been verified by UvrB, the UvrA molecules dissociate. The sequence is that of UvrABC system protein A from Escherichia coli (strain K12).